The following is a 488-amino-acid chain: Glutamyl-tRNA(Gln) amidotransferase subunit A (488 aa).

Residues Lys77 and Ser152 each act as charge relay system in the active site. Ser176 acts as the Acyl-ester intermediate in catalysis.

Belongs to the amidase family. GatA subfamily. Heterotrimer of A, B and C subunits.

It carries out the reaction L-glutamyl-tRNA(Gln) + L-glutamine + ATP + H2O = L-glutaminyl-tRNA(Gln) + L-glutamate + ADP + phosphate + H(+). Functionally, allows the formation of correctly charged Gln-tRNA(Gln) through the transamidation of misacylated Glu-tRNA(Gln) in organisms which lack glutaminyl-tRNA synthetase. The reaction takes place in the presence of glutamine and ATP through an activated gamma-phospho-Glu-tRNA(Gln). This chain is Glutamyl-tRNA(Gln) amidotransferase subunit A, found in Streptococcus pyogenes serotype M2 (strain MGAS10270).